A 419-amino-acid polypeptide reads, in one-letter code: GTPase Obg (419 aa).

Residues 1-158 (MIFIDTAEII…RRLRLELKLV (158 aa)) enclose the Obg domain. The OBG-type G domain maps to 159–328 (AHVGLVGLPN…LVDVLFELIS (170 aa)). Residues 165-172 (GLPNAGKS), 190-194 (FTTRS), 211-214 (DVPG), 281-284 (NKID), and 309-311 (SAA) contribute to the GTP site. Positions 172 and 192 each coordinate Mg(2+). An OCT domain is found at 344 to 419 (ELPPLPEDFS…VIHDKAFEIL (76 aa)).

This sequence belongs to the TRAFAC class OBG-HflX-like GTPase superfamily. OBG GTPase family. As to quaternary structure, monomer. Mg(2+) is required as a cofactor.

It localises to the cytoplasm. Its function is as follows. An essential GTPase which binds GTP, GDP and possibly (p)ppGpp with moderate affinity, with high nucleotide exchange rates and a fairly low GTP hydrolysis rate. Plays a role in control of the cell cycle, stress response, ribosome biogenesis and in those bacteria that undergo differentiation, in morphogenesis control. The sequence is that of GTPase Obg from Coprothermobacter proteolyticus (strain ATCC 35245 / DSM 5265 / OCM 4 / BT).